Reading from the N-terminus, the 209-residue chain is Uracil phosphoribosyltransferase (209 aa).

Residues arginine 79, arginine 104, and 131 to 139 contribute to the 5-phospho-alpha-D-ribose 1-diphosphate site; that span reads DPMLATGGS. Residues isoleucine 194 and 199–201 each bind uracil; that span reads GDA. A 5-phospho-alpha-D-ribose 1-diphosphate-binding site is contributed by aspartate 200.

Belongs to the UPRTase family. The cofactor is Mg(2+).

It carries out the reaction UMP + diphosphate = 5-phospho-alpha-D-ribose 1-diphosphate + uracil. It functions in the pathway pyrimidine metabolism; UMP biosynthesis via salvage pathway; UMP from uracil: step 1/1. With respect to regulation, allosterically activated by GTP. Its function is as follows. Catalyzes the conversion of uracil and 5-phospho-alpha-D-ribose 1-diphosphate (PRPP) to UMP and diphosphate. The chain is Uracil phosphoribosyltransferase from Lachnoclostridium phytofermentans (strain ATCC 700394 / DSM 18823 / ISDg) (Clostridium phytofermentans).